We begin with the raw amino-acid sequence, 419 residues long: Creatine kinase S-type, mitochondrial (419 aa).

A mitochondrion-targeting transit peptide spans 1–39 (MASIFSKLLTGRNASLLFATMGTSVLTTGYLLNRQKVCA). Positions 40-64 (EVREQPRLFPPSADYPDLRKHNNCM) are cardiolipin-binding. One can recognise a Phosphagen kinase N-terminal domain in the interval 46–132 (RLFPPSADYP…FDPVIKLRHN (87 aa)). The Phosphagen kinase C-terminal domain maps to 159 to 401 (YVLSSRVRTG…NYLVDCEKKL (243 aa)). ATP-binding positions include 162-166 (SSRVR) and histidine 225. Tyrosine 255 is subject to Phosphotyrosine. Residues arginine 270, arginine 326, 354 to 359 (RGTGGV), and aspartate 369 contribute to the ATP site. Threonine 356 bears the Phosphothreonine mark.

It belongs to the ATP:guanido phosphotransferase family. In terms of assembly, exists as an octamer composed of four CKMT2 homodimers. Sarcomere-specific. Found only in heart and skeletal muscles.

The protein resides in the mitochondrion inner membrane. It catalyses the reaction creatine + ATP = N-phosphocreatine + ADP + H(+). Its function is as follows. Reversibly catalyzes the transfer of phosphate between ATP and various phosphogens (e.g. creatine phosphate). Creatine kinase isoenzymes play a central role in energy transduction in tissues with large, fluctuating energy demands, such as skeletal muscle, heart, brain and spermatozoa. The chain is Creatine kinase S-type, mitochondrial (CKMT2) from Homo sapiens (Human).